The following is a 161-amino-acid chain: Putative pre-16S rRNA nuclease (161 aa).

This sequence belongs to the YqgF nuclease family.

Its subcellular location is the cytoplasm. Functionally, could be a nuclease involved in processing of the 5'-end of pre-16S rRNA. The polypeptide is Putative pre-16S rRNA nuclease (Bartonella bacilliformis (strain ATCC 35685 / KC583 / Herrer 020/F12,63)).